Consider the following 174-residue polypeptide: ATP synthase subunit d, mitochondrial (174 aa).

An N-acetylserine modification is found at Ser-2.

Belongs to the ATPase d subunit family.

It localises to the mitochondrion inner membrane. Its function is as follows. Mitochondrial membrane ATP synthase (F(1)F(0) ATP synthase or Complex V) produces ATP from ADP in the presence of a proton gradient across the membrane which is generated by electron transport complexes of the respiratory chain. F-type ATPases consist of two structural domains, F(1) - containing the extramembraneous catalytic core, and F(0) - containing the membrane proton channel, linked together by a central stalk and a peripheral stalk. During catalysis, ATP synthesis in the catalytic domain of F(1) is coupled via a rotary mechanism of the central stalk subunits to proton translocation. Part of the complex F(0) domain and the peripheric stalk, which acts as a stator to hold the catalytic alpha(3)beta(3) subcomplex and subunit a/ATP6 static relative to the rotary elements. This Kluyveromyces lactis (strain ATCC 8585 / CBS 2359 / DSM 70799 / NBRC 1267 / NRRL Y-1140 / WM37) (Yeast) protein is ATP synthase subunit d, mitochondrial (ATP7).